The following is a 194-amino-acid chain: Probable molybdenum cofactor guanylyltransferase (194 aa).

GTP contacts are provided by residues 8-10, lysine 20, and aspartate 99; that span reads LAG. Mg(2+) is bound at residue aspartate 99.

Belongs to the MobA family. The cofactor is Mg(2+).

The protein resides in the cytoplasm. It catalyses the reaction Mo-molybdopterin + GTP + H(+) = Mo-molybdopterin guanine dinucleotide + diphosphate. In terms of biological role, transfers a GMP moiety from GTP to Mo-molybdopterin (Mo-MPT) cofactor (Moco or molybdenum cofactor) to form Mo-molybdopterin guanine dinucleotide (Mo-MGD) cofactor. The polypeptide is Probable molybdenum cofactor guanylyltransferase (Synechococcus elongatus (strain ATCC 33912 / PCC 7942 / FACHB-805) (Anacystis nidulans R2)).